The primary structure comprises 184 residues: Acireductone dioxygenase 4 (184 aa).

Residues histidine 86, histidine 88, glutamate 92, and histidine 131 each contribute to the Fe(2+) site. Residues histidine 86, histidine 88, glutamate 92, and histidine 131 each coordinate Ni(2+).

The protein belongs to the acireductone dioxygenase (ARD) family. Requires Fe(2+) as cofactor. Ni(2+) serves as cofactor.

Its subcellular location is the cytoplasm. It is found in the nucleus. The enzyme catalyses 1,2-dihydroxy-5-(methylsulfanyl)pent-1-en-3-one + O2 = 4-methylsulfanyl-2-oxobutanoate + formate + 2 H(+). It catalyses the reaction 1,2-dihydroxy-5-(methylsulfanyl)pent-1-en-3-one + O2 = 3-(methylsulfanyl)propanoate + CO + formate + 2 H(+). Its pathway is amino-acid biosynthesis; L-methionine biosynthesis via salvage pathway; L-methionine from S-methyl-5-thio-alpha-D-ribose 1-phosphate: step 5/6. In terms of biological role, catalyzes 2 different reactions between oxygen and the acireductone 1,2-dihydroxy-3-keto-5-methylthiopentene (DHK-MTPene) depending upon the metal bound in the active site. Fe-containing acireductone dioxygenase (Fe-ARD) produces formate and 2-keto-4-methylthiobutyrate (KMTB), the alpha-ketoacid precursor of methionine in the methionine recycle pathway. Ni-containing acireductone dioxygenase (Ni-ARD) produces methylthiopropionate, carbon monoxide and formate, and does not lie on the methionine recycle pathway. The polypeptide is Acireductone dioxygenase 4 (ARD4) (Oryza sativa subsp. japonica (Rice)).